We begin with the raw amino-acid sequence, 177 residues long: Cell division protein ZapC (177 aa).

The protein belongs to the ZapC family. Interacts directly with FtsZ.

The protein localises to the cytoplasm. In terms of biological role, contributes to the efficiency of the cell division process by stabilizing the polymeric form of the cell division protein FtsZ. Acts by promoting interactions between FtsZ protofilaments and suppressing the GTPase activity of FtsZ. The polypeptide is Cell division protein ZapC (Shewanella oneidensis (strain ATCC 700550 / JCM 31522 / CIP 106686 / LMG 19005 / NCIMB 14063 / MR-1)).